Here is a 166-residue protein sequence, read N- to C-terminus: Apoptosis regulator M11L (166 aa).

A helical membrane pass occupies residues Ser-138 to Leu-160.

Interacts with host BAX; this interaction inhibits apoptosis activation. Interacts with host BAK1.

The protein resides in the host mitochondrion. Its subcellular location is the host membrane. Functionally, plays a role in the inhibition of mitochondria-mediated apoptosis by blocking the activation of mitochondria-tranlocalized BAX thereby maintaining pro-apoptotic BAX in an inactive conformation. Also inhibits apoptosis in a BAX-independent manner by interacting with and inhibiting host BAK1. This chain is Apoptosis regulator M11L (m011L), found in Myxoma virus (strain Lausanne) (MYXV).